A 200-amino-acid chain; its full sequence is Dephospho-CoA kinase (200 aa).

The DPCK domain maps to 4–200 (TIGLTGSVAT…TFIERFVNNK (197 aa)). 12-17 (ATGKST) serves as a coordination point for ATP.

It belongs to the CoaE family.

The protein resides in the cytoplasm. It catalyses the reaction 3'-dephospho-CoA + ATP = ADP + CoA + H(+). It functions in the pathway cofactor biosynthesis; coenzyme A biosynthesis; CoA from (R)-pantothenate: step 5/5. Its function is as follows. Catalyzes the phosphorylation of the 3'-hydroxyl group of dephosphocoenzyme A to form coenzyme A. The polypeptide is Dephospho-CoA kinase (Listeria innocua serovar 6a (strain ATCC BAA-680 / CLIP 11262)).